The chain runs to 256 residues: uncharacterized protein (256 aa).

The N-terminal stretch at 1–24 is a signal peptide; it reads MIKRVNKLVLGISLLFLVISITAG. Cys-25 is lipidated: N-palmitoyl cysteine. Cys-25 carries the S-diacylglycerol cysteine lipid modification.

The protein belongs to the staphylococcal tandem lipoprotein family.

The protein resides in the cell membrane. This is an uncharacterized protein from Staphylococcus aureus.